The following is a 599-amino-acid chain: UvrABC system protein C (599 aa).

The region spanning E15–V93 is the GIY-YIG domain. Residues H207–Y242 enclose the UVR domain.

Belongs to the UvrC family. Interacts with UvrB in an incision complex.

The protein localises to the cytoplasm. Functionally, the UvrABC repair system catalyzes the recognition and processing of DNA lesions. UvrC both incises the 5' and 3' sides of the lesion. The N-terminal half is responsible for the 3' incision and the C-terminal half is responsible for the 5' incision. This chain is UvrABC system protein C, found in Porphyromonas gingivalis (strain ATCC BAA-308 / W83).